We begin with the raw amino-acid sequence, 166 residues long: Cyclic pyranopterin monophosphate synthase (166 aa).

Substrate is bound by residues 75 to 77 and 115 to 116; these read MCH and ME. Asp130 is a catalytic residue.

Belongs to the MoaC family. As to quaternary structure, homohexamer; trimer of dimers.

The catalysed reaction is (8S)-3',8-cyclo-7,8-dihydroguanosine 5'-triphosphate = cyclic pyranopterin phosphate + diphosphate. It functions in the pathway cofactor biosynthesis; molybdopterin biosynthesis. Its function is as follows. Catalyzes the conversion of (8S)-3',8-cyclo-7,8-dihydroguanosine 5'-triphosphate to cyclic pyranopterin monophosphate (cPMP). This is Cyclic pyranopterin monophosphate synthase from Shouchella clausii (strain KSM-K16) (Alkalihalobacillus clausii).